Reading from the N-terminus, the 159-residue chain is SsrA-binding protein (159 aa).

This sequence belongs to the SmpB family.

The protein resides in the cytoplasm. In terms of biological role, required for rescue of stalled ribosomes mediated by trans-translation. Binds to transfer-messenger RNA (tmRNA), required for stable association of tmRNA with ribosomes. tmRNA and SmpB together mimic tRNA shape, replacing the anticodon stem-loop with SmpB. tmRNA is encoded by the ssrA gene; the 2 termini fold to resemble tRNA(Ala) and it encodes a 'tag peptide', a short internal open reading frame. During trans-translation Ala-aminoacylated tmRNA acts like a tRNA, entering the A-site of stalled ribosomes, displacing the stalled mRNA. The ribosome then switches to translate the ORF on the tmRNA; the nascent peptide is terminated with the 'tag peptide' encoded by the tmRNA and targeted for degradation. The ribosome is freed to recommence translation, which seems to be the essential function of trans-translation. This chain is SsrA-binding protein, found in Saccharophagus degradans (strain 2-40 / ATCC 43961 / DSM 17024).